Here is a 599-residue protein sequence, read N- to C-terminus: Elongation factor 4 (599 aa).

In terms of domain architecture, tr-type G spans 2–184; the sequence is KNIRNFSIIA…RLVRDIPPPE (183 aa). GTP is bound by residues 14 to 19 and 131 to 134; these read DHGKST and NKID.

This sequence belongs to the TRAFAC class translation factor GTPase superfamily. Classic translation factor GTPase family. LepA subfamily.

Its subcellular location is the cell inner membrane. The enzyme catalyses GTP + H2O = GDP + phosphate + H(+). Functionally, required for accurate and efficient protein synthesis under certain stress conditions. May act as a fidelity factor of the translation reaction, by catalyzing a one-codon backward translocation of tRNAs on improperly translocated ribosomes. Back-translocation proceeds from a post-translocation (POST) complex to a pre-translocation (PRE) complex, thus giving elongation factor G a second chance to translocate the tRNAs correctly. Binds to ribosomes in a GTP-dependent manner. This chain is Elongation factor 4, found in Cronobacter sakazakii (strain ATCC BAA-894) (Enterobacter sakazakii).